The following is a 429-amino-acid chain: Glutamate-1-semialdehyde 2,1-aminomutase 2 (429 aa).

K268 bears the N6-(pyridoxal phosphate)lysine mark.

Belongs to the class-III pyridoxal-phosphate-dependent aminotransferase family. HemL subfamily. In terms of assembly, homodimer. Pyridoxal 5'-phosphate is required as a cofactor.

The protein localises to the cytoplasm. It catalyses the reaction (S)-4-amino-5-oxopentanoate = 5-aminolevulinate. The protein operates within porphyrin-containing compound metabolism; protoporphyrin-IX biosynthesis; 5-aminolevulinate from L-glutamyl-tRNA(Glu): step 2/2. This chain is Glutamate-1-semialdehyde 2,1-aminomutase 2, found in Halalkalibacterium halodurans (strain ATCC BAA-125 / DSM 18197 / FERM 7344 / JCM 9153 / C-125) (Bacillus halodurans).